The sequence spans 708 residues: Homeobox-leucine zipper protein HDG10 (708 aa).

The interval 1–24 (MDSSHNDSSSDEEGIDSNNRRHHS) is disordered. A DNA-binding region (homeobox) is located at residues 16–75 (DSNNRRHHSNHQVQRLEAFFHECPHPDDSQRRQLGNELNLKHKQIKFWFQNRRTQARIHN). The stretch at 119–141 (LCNLQKLRTKNVILKTEYERLSS) forms a coiled coil. Residues 162 to 188 (GPSTYGSTSNNRPASYGSSSNHLPQQS) form a disordered region. Residues 165–188 (TYGSTSNNRPASYGSSSNHLPQQS) show a composition bias toward polar residues. The region spanning 218-456 (SQLEKNRMFE…LQRMCERLSL (239 aa)) is the START domain.

It belongs to the HD-ZIP homeobox family. Class IV subfamily. As to quaternary structure, interacts with ANT, BBM and AIL1. In terms of tissue distribution, expressed in exclusively in anthers with highest levels in the tapetum and pollen grains.

The protein resides in the nucleus. Probable transcription factor. The polypeptide is Homeobox-leucine zipper protein HDG10 (Arabidopsis thaliana (Mouse-ear cress)).